Consider the following 321-residue polypeptide: MSKQRVFIAGHRGMVGSAIRRQLEQRGDVELVLRTRDELNLLDSRAVHDFFASERIDQVYLAAAKVGGIVANNTYPADFIYQNMMIESNIIHAAHQNDVNKLLFLGSSCIYPKLAKQPMAESELLQGTLEPTNEPYAIAKIAGIKLCESYNRQYGRDYRSVMPTNLYGPHDNFHPSNSHVIPALLRRFHEATAQNAPDVVVWGSGTPMREFLHVDDMAAASIHVMELAHEVWLENTQPMLSHINVGTGVDCTIRELAQTIAKVVGYKGRVVFDASKPDGTPRKLLDVTRLHQLGWYHEISLEAGLASTYQWFLENQDRFRG.

NADP(+)-binding positions include 10–16 (GHRGMVG), 36–41 (RDELNL), and 105–108 (LGSS). The Proton donor/acceptor role is filled by tyrosine 136. NADP(+)-binding positions include lysine 140, 163–166 (PTNL), and histidine 179. Substrate contacts are provided by arginine 187, tryptophan 202, arginine 209, and aspartate 278.

The protein belongs to the NAD(P)-dependent epimerase/dehydratase family. Fucose synthase subfamily. Homodimer.

The protein localises to the cytoplasm. The catalysed reaction is GDP-beta-L-fucose + NADP(+) = GDP-4-dehydro-alpha-D-rhamnose + NADPH + H(+). Its pathway is nucleotide-sugar biosynthesis; GDP-L-fucose biosynthesis via de novo pathway; GDP-L-fucose from GDP-alpha-D-mannose: step 2/2. The protein operates within exopolysaccharide biosynthesis; colanic acid biosynthesis. Its activity is regulated as follows. Subject to product inhibition by NADP and GDP-fucose. Its function is as follows. Catalyzes the two-step NADP-dependent conversion of GDP-4-dehydro-6-deoxy-D-mannose to GDP-fucose, involving an epimerase and a reductase reaction. In Escherichia coli (strain K12), this protein is GDP-L-fucose synthase.